The chain runs to 200 residues: Holliday junction resolvase RecU (200 aa).

Residues 1 to 25 (MTIRYPNGKRYNQASQPHKTPIKKH) form a disordered region. Mg(2+) contacts are provided by threonine 85, aspartate 87, glutamate 100, and glutamine 119.

This sequence belongs to the RecU family. Mg(2+) is required as a cofactor.

It localises to the cytoplasm. It catalyses the reaction Endonucleolytic cleavage at a junction such as a reciprocal single-stranded crossover between two homologous DNA duplexes (Holliday junction).. Endonuclease that resolves Holliday junction intermediates in genetic recombination. Cleaves mobile four-strand junctions by introducing symmetrical nicks in paired strands. Promotes annealing of linear ssDNA with homologous dsDNA. Required for DNA repair, homologous recombination and chromosome segregation. The protein is Holliday junction resolvase RecU of Bacillus cereus (strain ZK / E33L).